The primary structure comprises 700 residues: Elongation factor G (700 aa).

Positions 10 to 285 (DRTRNIGIMA…AVIDYLPSPL (276 aa)) constitute a tr-type G domain. GTP-binding positions include 19 to 26 (AHIDAGKT), 83 to 87 (DTPGH), and 137 to 140 (NKMD).

It belongs to the TRAFAC class translation factor GTPase superfamily. Classic translation factor GTPase family. EF-G/EF-2 subfamily.

The protein localises to the cytoplasm. Its function is as follows. Catalyzes the GTP-dependent ribosomal translocation step during translation elongation. During this step, the ribosome changes from the pre-translocational (PRE) to the post-translocational (POST) state as the newly formed A-site-bound peptidyl-tRNA and P-site-bound deacylated tRNA move to the P and E sites, respectively. Catalyzes the coordinated movement of the two tRNA molecules, the mRNA and conformational changes in the ribosome. In Lacticaseibacillus casei (strain BL23) (Lactobacillus casei), this protein is Elongation factor G.